A 252-amino-acid chain; its full sequence is 3-dehydroquinate dehydratase (252 aa).

Residues 46-48 and Arg-82 contribute to the 3-dehydroquinate site; that span reads EWR. His-143 (proton donor/acceptor) is an active-site residue. Lys-170 functions as the Schiff-base intermediate with substrate in the catalytic mechanism. Arg-212, Ser-231, and Gln-235 together coordinate 3-dehydroquinate.

Belongs to the type-I 3-dehydroquinase family. In terms of assembly, homodimer.

It catalyses the reaction 3-dehydroquinate = 3-dehydroshikimate + H2O. Its pathway is metabolic intermediate biosynthesis; chorismate biosynthesis; chorismate from D-erythrose 4-phosphate and phosphoenolpyruvate: step 3/7. Its function is as follows. Involved in the third step of the chorismate pathway, which leads to the biosynthesis of aromatic amino acids. Catalyzes the cis-dehydration of 3-dehydroquinate (DHQ) and introduces the first double bond of the aromatic ring to yield 3-dehydroshikimate. The chain is 3-dehydroquinate dehydratase from Listeria monocytogenes serotype 4b (strain F2365).